A 243-amino-acid chain; its full sequence is Uridylate kinase (243 aa).

15-18 (KLSG) lines the ATP pocket. Positions 23–28 (GSEGFG) are involved in allosteric activation by GTP. A UMP-binding site is contributed by Gly-57. ATP is bound by residues Gly-58 and Arg-62. Residues Asp-77 and 138-145 (TGNPFFTT) contribute to the UMP site. Residues Thr-165, Tyr-171, and Asp-174 each contribute to the ATP site.

It belongs to the UMP kinase family. Homohexamer.

The protein localises to the cytoplasm. The enzyme catalyses UMP + ATP = UDP + ADP. Its pathway is pyrimidine metabolism; CTP biosynthesis via de novo pathway; UDP from UMP (UMPK route): step 1/1. With respect to regulation, allosterically activated by GTP. Inhibited by UTP. Functionally, catalyzes the reversible phosphorylation of UMP to UDP. The protein is Uridylate kinase of Vibrio cholerae serotype O1 (strain ATCC 39541 / Classical Ogawa 395 / O395).